A 42-amino-acid chain; its full sequence is uncharacterized protein (42 aa).

This is an uncharacterized protein from Treponema pallidum (strain Nichols).